The following is a 133-amino-acid chain: p53 and DNA damage-regulated protein 1 (133 aa).

It belongs to the prefoldin subunit beta family. In terms of assembly, component of the PAQosome complex which is responsible for the biogenesis of several protein complexes and which consists of R2TP complex members RUVBL1, RUVBL2, RPAP3 and PIH1D1, URI complex members PFDN2, PFDN6, PDRG1, UXT and URI1 as well as ASDURF, POLR2E and DNAAF10/WDR92. In terms of tissue distribution, predominantly expressed in normal testis and exhibits reduced but detectable expression in other organs.

It is found in the cytoplasm. May play a role in chaperone-mediated protein folding. The protein is p53 and DNA damage-regulated protein 1 (PDRG1) of Homo sapiens (Human).